We begin with the raw amino-acid sequence, 155 residues long: Cell division protein SepF (155 aa).

Residues 16-35 are compositionally biased toward acidic residues; it reads TEDEEEDVETVEESEDVEEE. The segment at 16 to 44 is disordered; the sequence is TEDEEEDVETVEESEDVEEEESKKPQFIQ.

Belongs to the SepF family. As to quaternary structure, homodimer. Interacts with FtsZ.

It is found in the cytoplasm. In terms of biological role, cell division protein that is part of the divisome complex and is recruited early to the Z-ring. Probably stimulates Z-ring formation, perhaps through the cross-linking of FtsZ protofilaments. Its function overlaps with FtsA. This is Cell division protein SepF from Acetivibrio thermocellus (strain ATCC 27405 / DSM 1237 / JCM 9322 / NBRC 103400 / NCIMB 10682 / NRRL B-4536 / VPI 7372) (Clostridium thermocellum).